The chain runs to 261 residues: Short-chain-enoyl-CoA hydratase (261 aa).

Glutamate 114 (nucleophile) is an active-site residue. Residue glutamate 134 is the Proton acceptor of the active site.

The protein belongs to the enoyl-CoA hydratase/isomerase family. As to quaternary structure, homotetramer.

It carries out the reaction a short-chain (3S)-3-hydroxyacyl-CoA = a short-chain (2E)-enoyl-CoA + H2O. The protein operates within lipid metabolism; butanoate metabolism. Functionally, catalyzes the reversible hydration of crotonyl-CoA. Can also use hexenoyl-CoA but not higher analogs. This is Short-chain-enoyl-CoA hydratase (crt) from Clostridium acetobutylicum (strain ATCC 824 / DSM 792 / JCM 1419 / IAM 19013 / LMG 5710 / NBRC 13948 / NRRL B-527 / VKM B-1787 / 2291 / W).